An 85-amino-acid chain; its full sequence is Small ribosomal subunit protein bS16 (85 aa).

Belongs to the bacterial ribosomal protein bS16 family.

The polypeptide is Small ribosomal subunit protein bS16 (Xanthomonas oryzae pv. oryzae (strain PXO99A)).